The primary structure comprises 393 residues: Neuroplastin (393 aa).

A signal peptide spans 1–28 (MSGSSLPGALALSLLLVSGSLLPGPGAA). Ig-like domains are found at residues 29–134 (QNAG…PSIT), 148–234 (PRIV…IEVK), and 237–327 (PDIT…ASVS). Over 29 to 338 (QNAGFVKSPM…VLRVRSHLAP (310 aa)) the chain is Extracellular. Cys52 and Cys116 are disulfide-bonded. Positions 149-161 (RIVTSEEVIIRDS) are narpin; mediates binding with FGFR1 and has antidepressant-like activity. An intrachain disulfide couples Cys169 to Cys217. N-linked (GlcNAc...) asparagine glycans are attached at residues Asn170, Asn196, Asn228, Asn283, Asn295, and Asn316. Cys258 and Cys315 form a disulfide bridge. Residues 339 to 359 (LWPFLGILAEIIILVVIIVVY) traverse the membrane as a helical segment. Over 360–393 (EKRKRPDEVPDAGPMKTNSTNNHKDKNLRQRNTN) the chain is Cytoplasmic. A disordered region spans residues 366–393 (DEVPDAGPMKTNSTNNHKDKNLRQRNTN).

As to quaternary structure, interacts with ATP2B1; this interaction stabilizes ATP2B1 and increases ATPase activity; this interaction controls T cell calcium homeostasis following T cell activation. Interacts with XKR8; promoting its localization at the cell membrane. Isoform 1 and isoform 2 are N-glycosylated. As to expression, isoform 1 is ubiquitously expressed. Isoform 2 is brain-specific. In brain isoform 2 is highly expressed in hippocampus and cerebral cortex and weakly in cerebellum and lower brain regions. In the hippocampus isoform 2 is found in the dentate gyrus and CA1-CA4, the striatum oriens of CA3 shows the higher level.

The protein resides in the cell membrane. The protein localises to the postsynaptic density. Probable homophilic and heterophilic cell adhesion molecule involved in long term potentiation at hippocampal excitatory synapses through activation of p38MAPK. May also regulate neurite outgrowth by activating the FGFR1 signaling pathway. May play a role in synaptic plasticity. Also acts as a chaperone for ATP2B1; stabilizes ATP2B1 and increases its ATPase activity. Promotes localization of XKR8 at the cell membrane. In Rattus norvegicus (Rat), this protein is Neuroplastin (Nptn).